The sequence spans 188 residues: Peptidyl-tRNA hydrolase (188 aa).

Phenylalanine 14 lines the tRNA pocket. Residue histidine 19 is the Proton acceptor of the active site. Residues tyrosine 64, asparagine 66, and asparagine 112 each contribute to the tRNA site.

This sequence belongs to the PTH family. In terms of assembly, monomer.

Its subcellular location is the cytoplasm. It catalyses the reaction an N-acyl-L-alpha-aminoacyl-tRNA + H2O = an N-acyl-L-amino acid + a tRNA + H(+). Its function is as follows. Hydrolyzes ribosome-free peptidyl-tRNAs (with 1 or more amino acids incorporated), which drop off the ribosome during protein synthesis, or as a result of ribosome stalling. Catalyzes the release of premature peptidyl moieties from peptidyl-tRNA molecules trapped in stalled 50S ribosomal subunits, and thus maintains levels of free tRNAs and 50S ribosomes. In Aster yellows witches'-broom phytoplasma (strain AYWB), this protein is Peptidyl-tRNA hydrolase.